Consider the following 219-residue polypeptide: Histone H1.4 (219 aa).

A compositionally biased stretch (low complexity) spans methionine 1 to alanine 15. Positions methionine 1–serine 41 are disordered. Serine 2 carries the N-acetylserine modification. Residue serine 2 is modified to Phosphoserine. Lysine 17 carries the post-translational modification N6-acetyllysine. Position 18 is a phosphothreonine (threonine 18). Residues isoleucine 20–alanine 35 are compositionally biased toward basic residues. N6-acetyllysine; alternate is present on lysine 26. Lysine 26 carries the post-translational modification N6-methyllysine; alternate. Lysine 34 is modified (N6-(beta-hydroxybutyryl)lysine; alternate). At lysine 34 the chain carries N6-succinyllysine; alternate. Phosphoserine is present on serine 36. The H15 domain occupies serine 36–lysine 109. N6-(beta-hydroxybutyryl)lysine is present on lysine 52. The residue at position 54 (arginine 54) is a Citrulline. N6-(beta-hydroxybutyryl)lysine occurs at positions 64, 85, 90, and 106. Positions threonine 92 to lysine 219 are disordered. A compositionally biased stretch (basic residues) spans lysine 119–lysine 140. The residue at position 146 (threonine 146) is a Phosphothreonine. 2 stretches are compositionally biased toward basic residues: residues lysine 149–lysine 160 and lysine 168–proline 185. Residue serine 150 is modified to ADP-ribosylserine. Position 187 is a phosphoserine (serine 187). Basic residues predominate over residues arginine 192–lysine 219.

It belongs to the histone H1/H5 family. Post-translationally, H1 histones are progressively phosphorylated during the cell cycle, becoming maximally phosphorylated during late G2 phase and M phase, and being dephosphorylated sharply thereafter. In terms of processing, acetylated at Lys-26. Deacetylated at Lys-26 by SIRT1. Citrullination at Arg-54 (H1R54ci) by PADI4 takes place within the DNA-binding site of H1 and results in its displacement from chromatin and global chromatin decondensation, thereby promoting pluripotency and stem cell maintenance. Post-translationally, ADP-ribosylated on Ser-150 in response to DNA damage.

The protein resides in the nucleus. Its subcellular location is the chromosome. Functionally, histone H1 protein binds to linker DNA between nucleosomes forming the macromolecular structure known as the chromatin fiber. Histones H1 are necessary for the condensation of nucleosome chains into higher-order structured fibers. Also acts as a regulator of individual gene transcription through chromatin remodeling, nucleosome spacing and DNA methylation. This is Histone H1.4 from Rattus norvegicus (Rat).